The sequence spans 39 residues: Natriuretic peptide TcNPa (39 aa).

Positions 1–8 (SGSETAKI) are excised as a propeptide. C12 and C28 are disulfide-bonded. An O-linked (GalNAc...) threonine glycan is attached at T35.

This sequence belongs to the natriuretic peptide family. Post-translationally, O-linked glycans consist of galactosyl-beta(1-3)-N-acetylgalactosamine (Gal-GalNAc). In terms of processing, the synthetic non-glycosylated form shows higher potency on natriuretic receptors (EC(50)=672.90 nM) and NPR2 (EC(50)=261.0 nM). Expressed by the venom gland.

It localises to the secreted. In terms of biological role, snake venom natriuretic peptide that targets both NPR1 (EC(50)=1080.0 nM) and NPR2 (EC(50)=328.60 nM). Exhibits hypotensive and vasodepressor activities. The polypeptide is Natriuretic peptide TcNPa (Tropidechis carinatus (Australian rough-scaled snake)).